Here is a 293-residue protein sequence, read N- to C-terminus: Phosphatidylglycerol--prolipoprotein diacylglyceryl transferase (293 aa).

4 consecutive transmembrane segments (helical) span residues 4–24 (ILAF…LFIF), 45–65 (FELR…YFVA), 81–101 (ELIF…YVLF), and 115–135 (IWEG…TGFL). Residue Arg-165 coordinates a 1,2-diacyl-sn-glycero-3-phospho-(1'-sn-glycerol). 3 consecutive transmembrane segments (helical) span residues 204–224 (PTFL…SVYF), 231–249 (HGEV…RIVI), and 262–282 (IKAA…GFLI).

The protein belongs to the Lgt family.

The protein resides in the cell inner membrane. The catalysed reaction is L-cysteinyl-[prolipoprotein] + a 1,2-diacyl-sn-glycero-3-phospho-(1'-sn-glycerol) = an S-1,2-diacyl-sn-glyceryl-L-cysteinyl-[prolipoprotein] + sn-glycerol 1-phosphate + H(+). It functions in the pathway protein modification; lipoprotein biosynthesis (diacylglyceryl transfer). Its function is as follows. Catalyzes the transfer of the diacylglyceryl group from phosphatidylglycerol to the sulfhydryl group of the N-terminal cysteine of a prolipoprotein, the first step in the formation of mature lipoproteins. The protein is Phosphatidylglycerol--prolipoprotein diacylglyceryl transferase of Thermotoga petrophila (strain ATCC BAA-488 / DSM 13995 / JCM 10881 / RKU-1).